Here is a 923-residue protein sequence, read N- to C-terminus: Dynein axonemal intermediate chain 3 (923 aa).

The interval 1–35 (MAPKPPKSPKGQKKGKKNMKQQLLVPEEEEPMNME) is disordered. The segment covering 10–19 (KGQKKGKKNM) has biased composition (basic residues). WD repeat units follow at residues 398-438 (ESPD…DRIE), 480-536 (GHRK…PAVT), 702-741 (VHDG…GPLL), and 745-785 (CGPK…HEPA). A coiled-coil region spans residues 869–889 (LELVKKKAKIYQKTKEQMEAE).

Interacts with ACTR2; this interaction reduces binding of the Arp2/3 complex to the VCA domain of nucleation promoting factors. Part of the multisubunit axonemal dynein complex formed at least of two heavy chains and a number of intermediate and light chains. Found in a associated with the catalytic heavy chain DNAH2, the intermediate chain DNAI4, and the light chain DYNLT1. Strongly expressed in the testes. Detected also in brain and lung tissues.

Its subcellular location is the cytoplasm. Its function is as follows. Acts as a negative regulator of cell migration, invasion, and metastasis downstream of p53/TP53, through inhibition of Arp2/3 complex-mediated actin polymerization. Via its association with the multisubunit axonemal dynein complex, is potentially involved in the regulation of cilia function. May play a role in osteogenesis of dental tissue-derived mesenchymal stem cells. The polypeptide is Dynein axonemal intermediate chain 3 (Dnai3) (Mus musculus (Mouse)).